The following is a 215-amino-acid chain: Peroxiredoxin 1 (215 aa).

The 157-residue stretch at 1 to 157 folds into the Thioredoxin domain; it reads MKLYQKFPET…LLRITKAALV (157 aa). Cysteine 45 functions as the Cysteine sulfenic acid (-SOH) intermediate in the catalytic mechanism. Arginine 120 contributes to the substrate binding site.

This sequence belongs to the peroxiredoxin family. Prx6 subfamily. Homodecamer. Pentamer of dimers that assemble into a ring structure.

The protein resides in the cytoplasm. The enzyme catalyses a hydroperoxide + [thioredoxin]-dithiol = an alcohol + [thioredoxin]-disulfide + H2O. Functionally, thiol-specific peroxidase that catalyzes the reduction of hydrogen peroxide and organic hydroperoxides to water and alcohols, respectively. Plays a role in cell protection against oxidative stress by detoxifying peroxides. The sequence is that of Peroxiredoxin 1 from Sulfuracidifex metallicus (Sulfolobus metallicus).